A 128-amino-acid chain; its full sequence is Histone H2A.2 (128 aa).

Belongs to the histone H2A family. The nucleosome is a histone octamer containing two molecules each of H2A, H2B, H3 and H4 assembled in one H3-H4 heterotetramer and two H2A-H2B heterodimers. The octamer wraps approximately 147 bp of DNA. Expressed in the generative cell within the bicellular pollen. Not detected in other reproductive or vegetative tissues.

Its subcellular location is the nucleus. The protein resides in the chromosome. Functionally, core component of nucleosome. Nucleosomes wrap and compact DNA into chromatin, limiting DNA accessibility to the cellular machineries which require DNA as a template. Histones thereby play a central role in transcription regulation, DNA repair, DNA replication and chromosomal stability. DNA accessibility is regulated via a complex set of post-translational modifications of histones, also called histone code, and nucleosome remodeling. May be involved in the repression of gene expression in male gametes. The protein is Histone H2A.2 (gH2A) of Lilium longiflorum (Trumpet lily).